A 55-amino-acid polypeptide reads, in one-letter code: ATP synthase small subunit 6, mitochondrial (55 aa).

A mitochondrion-targeting transit peptide spans 1–15; the sequence is MRQFDPWPVFFRREW. A helical transmembrane segment spans residues 20-39; it reads PFLVGFAVTGAIITKMSLGF.

Belongs to the ATPase 6 subunit family.

It is found in the mitochondrion inner membrane. Functionally, mitochondrial membrane ATP synthase (F(1)F(0) ATP synthase or Complex V) produces ATP from ADP in the presence of a proton gradient across the membrane which is generated by electron transport complexes of the respiratory chain. F-type ATPases consist of two structural domains, F(1) - containing the extramembraneous catalytic core and F(0) - containing the membrane proton channel, linked together by a central stalk and a peripheral stalk. During catalysis, ATP synthesis in the catalytic domain of F(1) is coupled via a rotary mechanism of the central stalk subunits to proton translocation. Part of the complex F(0) domain. Confers tolerance to several abiotic stresses (e.g. salt, mannitol, drought, oxidative and cold stresses), probably by providing additional energy needed for cell homeostasis. This chain is ATP synthase small subunit 6, mitochondrial, found in Solanum tuberosum (Potato).